Consider the following 263-residue polypeptide: 3-methyl-2-oxobutanoate hydroxymethyltransferase (263 aa).

2 residues coordinate Mg(2+): Asp-43 and Asp-82. Residues 43-44 (DS), Asp-82, and Lys-111 contribute to the 3-methyl-2-oxobutanoate site. Glu-113 is a binding site for Mg(2+). The active-site Proton acceptor is the Glu-179.

It belongs to the PanB family. In terms of assembly, homodecamer; pentamer of dimers. Requires Mg(2+) as cofactor.

Its subcellular location is the cytoplasm. It catalyses the reaction 3-methyl-2-oxobutanoate + (6R)-5,10-methylene-5,6,7,8-tetrahydrofolate + H2O = 2-dehydropantoate + (6S)-5,6,7,8-tetrahydrofolate. Its pathway is cofactor biosynthesis; (R)-pantothenate biosynthesis; (R)-pantoate from 3-methyl-2-oxobutanoate: step 1/2. Catalyzes the reversible reaction in which hydroxymethyl group from 5,10-methylenetetrahydrofolate is transferred onto alpha-ketoisovalerate to form ketopantoate. The sequence is that of 3-methyl-2-oxobutanoate hydroxymethyltransferase from Neisseria gonorrhoeae (strain ATCC 700825 / FA 1090).